Reading from the N-terminus, the 214-residue chain is Probable nicotinate-nucleotide adenylyltransferase (214 aa).

The protein belongs to the NadD family.

The catalysed reaction is nicotinate beta-D-ribonucleotide + ATP + H(+) = deamido-NAD(+) + diphosphate. It participates in cofactor biosynthesis; NAD(+) biosynthesis; deamido-NAD(+) from nicotinate D-ribonucleotide: step 1/1. Its function is as follows. Catalyzes the reversible adenylation of nicotinate mononucleotide (NaMN) to nicotinic acid adenine dinucleotide (NaAD). In Mycobacterium bovis (strain ATCC BAA-935 / AF2122/97), this protein is Probable nicotinate-nucleotide adenylyltransferase.